Reading from the N-terminus, the 1014-residue chain is C2 domain-containing protein 5 (1014 aa).

In terms of domain architecture, C2 spans methionine 1–phenylalanine 109. The Ca(2+) site is built by aspartate 19, aspartate 26, aspartate 76, aspartate 78, serine 81, and aspartate 84. Disordered regions lie at residues leucine 274–glycine 328, glutamate 639–aspartate 669, alanine 801–glycine 878, and glutamate 992–threonine 1014. Polar residues predominate over residues asparagine 275–tyrosine 292. Over residues serine 293–glycine 318 the composition is skewed to low complexity. The segment covering methionine 319 to glycine 328 has biased composition (gly residues). Positions serine 830–serine 840 are enriched in polar residues. Positions alanine 993–alanine 1006 are enriched in low complexity.

Ca(2+) is required as a cofactor.

It is found in the cytoplasmic vesicle membrane. The protein resides in the cytoplasm. The protein localises to the cell cortex. It localises to the cell membrane. Its subcellular location is the cell projection. It is found in the ruffle. Its function is as follows. May be required for insulin-stimulated glucose transport and glucose transporter SLC2A4/GLUT4 translocation from intracellular glucose storage vesicle (GSV) to the plasma membrane (PM) in adipocytes. May bind phospholipid membranes in a calcium-dependent manner. The chain is C2 domain-containing protein 5 (c2cd5) from Xenopus tropicalis (Western clawed frog).